The sequence spans 83 residues: DNA-directed RNA polymerase subunit omega (83 aa).

Belongs to the RNA polymerase subunit omega family. As to quaternary structure, the RNAP catalytic core consists of 2 alpha, 1 beta, 1 beta' and 1 omega subunit. When a sigma factor is associated with the core the holoenzyme is formed, which can initiate transcription.

It catalyses the reaction RNA(n) + a ribonucleoside 5'-triphosphate = RNA(n+1) + diphosphate. Promotes RNA polymerase assembly. Latches the N- and C-terminal regions of the beta' subunit thereby facilitating its interaction with the beta and alpha subunits. The sequence is that of DNA-directed RNA polymerase subunit omega from Chromohalobacter salexigens (strain ATCC BAA-138 / DSM 3043 / CIP 106854 / NCIMB 13768 / 1H11).